The following is a 154-amino-acid chain: Spermatogenesis-associated protein 19, mitochondrial (154 aa).

The N-terminal 24 residues, Met1–Val24, are a transit peptide targeting the mitochondrion. Ser26 and Ser116 each carry phosphoserine.

It localises to the mitochondrion outer membrane. It is found in the mitochondrion. Its subcellular location is the cell projection. The protein resides in the cilium. The protein localises to the flagellum. Essential for sperm motility and male fertility. Plays an important role in sperm motility by regulating the organization and function of the mitochondria and is also required for correct sperm midpiece assembly. The polypeptide is Spermatogenesis-associated protein 19, mitochondrial (SPATA19) (Bos taurus (Bovine)).